The sequence spans 400 residues: NADH-quinone oxidoreductase subunit D (400 aa).

This sequence belongs to the complex I 49 kDa subunit family. NDH-1 is composed of 14 different subunits. Subunits NuoB, C, D, E, F, and G constitute the peripheral sector of the complex.

Its subcellular location is the cell inner membrane. The enzyme catalyses a quinone + NADH + 5 H(+)(in) = a quinol + NAD(+) + 4 H(+)(out). Its function is as follows. NDH-1 shuttles electrons from NADH, via FMN and iron-sulfur (Fe-S) centers, to quinones in the respiratory chain. The immediate electron acceptor for the enzyme in this species is believed to be a menaquinone. Couples the redox reaction to proton translocation (for every two electrons transferred, four hydrogen ions are translocated across the cytoplasmic membrane), and thus conserves the redox energy in a proton gradient. The protein is NADH-quinone oxidoreductase subunit D of Chlorobium phaeobacteroides (strain DSM 266 / SMG 266 / 2430).